Reading from the N-terminus, the 941-residue chain is Endoplasmic reticulum aminopeptidase 1 (941 aa).

Residue Met1 is a topological domain, cytoplasmic. Residues 2–21 (VFLPLKWSLATMSFLLSSLL) form a helical; Signal-anchor for type II membrane protein membrane-spanning segment. Topologically, residues 22–941 (ALLTVSTPSW…WLQSEKLERM (920 aa)) are lumenal. Residues Asn70 and Asn154 are each glycosylated (N-linked (GlcNAc...) asparagine). Substrate-binding positions include Glu183 and 317 to 321 (GAMEN). His353 contributes to the Zn(2+) binding site. The active-site Proton acceptor is Glu354. Positions 357 and 376 each coordinate Zn(2+). 2 disulfide bridges follow: Cys404–Cys443 and Cys736–Cys743. Asn414 carries an N-linked (GlcNAc...) asparagine glycan. Asn760 and Asn901 each carry an N-linked (GlcNAc...) asparagine glycan.

Belongs to the peptidase M1 family. In terms of assembly, monomer. May also exist as a heterodimer; with ERAP2. Interacts with RBMX. It depends on Zn(2+) as a cofactor. N-glycosylated. Ubiquitous.

Its subcellular location is the endoplasmic reticulum membrane. Aminopeptidase that plays a central role in peptide trimming, a step required for the generation of most HLA class I-binding peptides. Peptide trimming is essential to customize longer precursor peptides to fit them to the correct length required for presentation on MHC class I molecules. Strongly prefers substrates 9-16 residues long. Rapidly degrades 13-mer to a 9-mer and then stops. Preferentially hydrolyzes the residue Leu and peptides with a hydrophobic C-terminus, while it has weak activity toward peptides with charged C-terminus. May play a role in the inactivation of peptide hormones. May be involved in the regulation of blood pressure through the inactivation of angiotensin II and/or the generation of bradykinin in the kidney. This chain is Endoplasmic reticulum aminopeptidase 1 (ERAP1), found in Homo sapiens (Human).